The chain runs to 447 residues: Cytochrome P450 BJ-4 homolog (447 aa).

Position 392 (cysteine 392) interacts with heme.

It belongs to the cytochrome P450 family. The cofactor is heme.

Functionally, cytochromes P450 are a group of heme-thiolate monooxygenases. They oxidize a variety of structurally unrelated compounds, including steroids, fatty acids, and xenobiotics. The protein is Cytochrome P450 BJ-4 homolog (cyp117A2) of Sinorhizobium fredii (strain NBRC 101917 / NGR234).